A 469-amino-acid chain; its full sequence is Zinc transporter SLC39A7 (469 aa).

Residues 10–30 (WVAVGLLTWATLGLLVAELGG) traverse the membrane as a helical segment. Composition is skewed to basic and acidic residues over residues 42-56 (FHGHSHRHSHEDFHH) and 66-114 (HTHE…EHSR). The tract at residues 42-121 (FHGHSHRHSH…HSRGGYGESG (80 aa)) is disordered. His66 is subject to Pros-methylhistidine. The next 3 membrane-spanning stretches (helical) occupy residues 138–158 (ALGATVLISAAPFFVLFLIPV), 169–189 (LQILLSFASGGLLGDAFLHLI), and 214–234 (GPILSVGLWVLSGIVAFLVVE). Basic residues predominate over residues 242–263 (GGHGHSHGHGHAHSHTHGSHGH). The segment at 242–310 (GGHGHSHGHG…VRPQNAEEEK (69 aa)) is disordered. Residues 264–285 (GRQECSTKEKQSSEEEEKETRG) are compositionally biased toward basic and acidic residues. 2 positions are modified to phosphoserine: Ser275 and Ser276. The next 3 helical transmembrane spans lie at 386 to 406 (LTAVGALAGTACALLTEGGAV), 410 to 430 (IAGGAGPGWVLPFTAGGFIYV), and 448 to 468 (SLLEVLGLLGGVVMMVLIAHL).

The protein belongs to the ZIP transporter (TC 2.A.5) family. KE4/Catsup subfamily. Homodimer. Methylation at some His residue by METTL9 leads to reduced zinc-binding. Post-translationally, rapidly phosphorylated by CK2 following Zn(2+) treatment. This phosphorylation is required for efficient cytosolic Zn(2+) release.

The protein resides in the endoplasmic reticulum membrane. It localises to the golgi apparatus. Its subcellular location is the cis-Golgi network membrane. It carries out the reaction Zn(2+)(in) = Zn(2+)(out). Functionally, transports Zn(2+) from the endoplasmic reticulum (ER)/Golgi apparatus to the cytosol, playing an essential role in the regulation of cytosolic zinc levels. Acts as a gatekeeper of zinc release from intracellular stores, requiring post-translational activation by phosphorylation, resulting in activation of multiple downstream pathways leading to cell growth and proliferation. Has an essential role in B cell development and is required for proper B cell receptor signaling. Plays an important role in maintaining intestinal epithelial homeostasis and skin dermis development by regulating ER function. Controls cell signaling pathways involved in glucose metabolism in skeletal muscle. Has a protective role against ER stress in different biological contexts. Mediates Zn(2+)-induced ferroptosis. This chain is Zinc transporter SLC39A7, found in Pongo abelii (Sumatran orangutan).